The sequence spans 546 residues: 2-isopropylmalate synthase (546 aa).

A Pyruvate carboxyltransferase domain is found at 8–271; that stretch reads ILIFDTTLRD…NSFFKRNPDS (264 aa). Mn(2+)-binding residues include Asp17, His208, His210, and Asn244. The tract at residues 408–546 is regulatory domain; that stretch reads QLCLVQVSCG…NKTFLSNPAN (139 aa).

The protein belongs to the alpha-IPM synthase/homocitrate synthase family. LeuA type 1 subfamily. In terms of assembly, homodimer. Requires Mn(2+) as cofactor.

Its subcellular location is the cytoplasm. It catalyses the reaction 3-methyl-2-oxobutanoate + acetyl-CoA + H2O = (2S)-2-isopropylmalate + CoA + H(+). Its pathway is amino-acid biosynthesis; L-leucine biosynthesis; L-leucine from 3-methyl-2-oxobutanoate: step 1/4. Catalyzes the condensation of the acetyl group of acetyl-CoA with 3-methyl-2-oxobutanoate (2-ketoisovalerate) to form 3-carboxy-3-hydroxy-4-methylpentanoate (2-isopropylmalate). The chain is 2-isopropylmalate synthase from Prochlorococcus marinus (strain MIT 9312).